A 244-amino-acid chain; its full sequence is Glucosamine-6-phosphate deaminase (244 aa).

Residue Asp-67 is the Proton acceptor; for enolization step of the active site. Asn-136 acts as the For ring-opening step in catalysis. The active-site Proton acceptor; for ring-opening step is the His-138. The active-site For ring-opening step is the Glu-143.

It belongs to the glucosamine/galactosamine-6-phosphate isomerase family. NagB subfamily.

It carries out the reaction alpha-D-glucosamine 6-phosphate + H2O = beta-D-fructose 6-phosphate + NH4(+). It participates in amino-sugar metabolism; N-acetylneuraminate degradation; D-fructose 6-phosphate from N-acetylneuraminate: step 5/5. In terms of biological role, catalyzes the reversible isomerization-deamination of glucosamine 6-phosphate (GlcN6P) to form fructose 6-phosphate (Fru6P) and ammonium ion. The sequence is that of Glucosamine-6-phosphate deaminase from Clostridium botulinum (strain Loch Maree / Type A3).